A 323-amino-acid polypeptide reads, in one-letter code: Estradiol 17 beta-dehydrogenase 5 (323 aa).

Residues 20–24 (GFGTY) and Asp-50 each bind NADP(+). Catalysis depends on Tyr-55, which acts as the Proton donor. His-117 is a substrate binding site. NADP(+) is bound by residues 166–167 (SN), Gln-190, 216–221 (YSALGS), and 270–280 (KSFSEKRIKEN).

Belongs to the aldo/keto reductase family. In terms of assembly, monomer. Three forms are detected, probably due to post-translational modifications. In terms of tissue distribution, mainly found in liver. Also expressed weakly in kidney.

Functionally, active toward androgens, estrogens, and xenobiotic substrates. Also exhibits low 20 alpha-HSD activity. Shows a-stereospecificity in hydrogen transfer between cofactors and substrates (A-specific). Preferentially catalyzes the reduction of 4-androstenedione, 5-alpha-androstane-3,17-dione, androsterone and dehydroepiandrosterone to testosterone, dihydrotestosterone, 5-alpha-androstane-3-alpha,17-beta-diol and 5-androstene-3-beta,17-beta-diol, respectively. This chain is Estradiol 17 beta-dehydrogenase 5 (Akr1c6), found in Mus musculus (Mouse).